The sequence spans 831 residues: SID1 transmembrane family member 1 (831 aa).

Residues 1-19 (MLDCPRLALLCALPWLLRA) form the signal peptide. The Extracellular portion of the chain corresponds to 20 to 308 (AVPGHRAEPL…SVKGSVYVKS (289 aa)). Asn67, Asn83, Asn136, and Asn281 each carry an N-linked (GlcNAc...) asparagine glycan. A helical membrane pass occupies residues 309-329 (SLFSVFVFLSFYLGCLLVVFV). Residues 330 to 441 (HHMRFQRKPV…DRRIVSKKYK (112 aa)) lie on the Cytoplasmic side of the membrane. The interval 354–408 (VSHPITASTPEGSNYGAIDESSSSPGRQMSSSDGGQPCHSDTDSSVEESDFDTMP) is disordered. Residues 374–385 (SSSSPGRQMSSS) show a composition bias toward low complexity. Residues 397 to 408 (SSVEESDFDTMP) show a composition bias toward acidic residues. A helical membrane pass occupies residues 442–462 (IYFWNIITIAVFYALPVMQLV). Over 463-493 (ITYQTVVNVTGNQDICYYNFLCAHPLGVLSA) the chain is Extracellular. A glycan (N-linked (GlcNAc...) asparagine) is linked at Asn470. Residues 494–514 (FNNILSNLGHVLLGFLFLLIV) traverse the membrane as a helical segment. Residues 515–540 (LRRDLLHRRALEAKDIFAMEYGIPKH) lie on the Cytoplasmic side of the membrane. Residues 541-561 (FGLFYAMGIALMMEGVLSACY) form a helical membrane-spanning segment. The Extracellular segment spans residues 562–571 (HVCPNYSNFQ). The N-linked (GlcNAc...) asparagine glycan is linked to Asn566. A helical membrane pass occupies residues 572 to 589 (FDTSFMYMIAGLCMLKLY). The Cytoplasmic segment spans residues 590–599 (QTRHPDINAS). A helical transmembrane segment spans residues 600–620 (AYSAYASFAVVITLTVLGVVF). Residues 621–625 (GKNDV) lie on the Extracellular side of the membrane. The chain crosses the membrane as a helical span at residues 626–646 (WFWIIFSAIHVLASLALSTQI). The Cytoplasmic segment spans residues 647 to 687 (YYMGRFKIDVSDTDLGIFRRAAMVFYTDCIQQCSRPLYMDR). The chain crosses the membrane as a helical span at residues 688–708 (MVLLIVGNLVNWSFALFGLIY). Over 709–714 (RPRDFA) the chain is Extracellular. The chain crosses the membrane as a helical span at residues 715–735 (SYMLGIFICNLLLYLAFYIIM). The Cytoplasmic portion of the chain corresponds to 736–745 (KLRSSEKVLP). The helical transmembrane segment at 746–766 (LPVFCIVATAVVWAAALYFFF) threads the bilayer. Topologically, residues 767–795 (QNLSSWEGTPAESREKNRECVLLGFFDDH) are extracellular. Residue Asn768 is glycosylated (N-linked (GlcNAc...) asparagine). A helical transmembrane segment spans residues 796 to 816 (DIWHFLSATALFFSFLVLLTL). The Cytoplasmic portion of the chain corresponds to 817-831 (DDDLDVVRRDQIPVF).

It belongs to the SID1 family.

The protein resides in the membrane. In vitro binds long double-stranded RNA (dsRNA) (500 and 700 base pairs), but not dsRNA shorter than 300 bp. Not involved in RNA autophagy, a process in which RNA is directly imported into lysosomes in an ATP-dependent manner, and degraded. This chain is SID1 transmembrane family member 1 (Sidt1), found in Rattus norvegicus (Rat).